Consider the following 99-residue polypeptide: Large ribosomal subunit protein bL28 (99 aa).

Belongs to the bacterial ribosomal protein bL28 family.

The sequence is that of Large ribosomal subunit protein bL28 from Rhizobium etli (strain CIAT 652).